Here is a 214-residue protein sequence, read N- to C-terminus: tRNA (guanine-N(7)-)-methyltransferase (214 aa).

4 residues coordinate S-adenosyl-L-methionine: Glu43, Glu68, Asn99, and Asp121. The active site involves Asp121. Substrate contacts are provided by residues Lys125, Asp157, and 194-197 (TEYE).

The protein belongs to the class I-like SAM-binding methyltransferase superfamily. TrmB family.

The catalysed reaction is guanosine(46) in tRNA + S-adenosyl-L-methionine = N(7)-methylguanosine(46) in tRNA + S-adenosyl-L-homocysteine. It participates in tRNA modification; N(7)-methylguanine-tRNA biosynthesis. Its function is as follows. Catalyzes the formation of N(7)-methylguanine at position 46 (m7G46) in tRNA. This chain is tRNA (guanine-N(7)-)-methyltransferase, found in Alkaliphilus metalliredigens (strain QYMF).